A 323-amino-acid polypeptide reads, in one-letter code: MNKILFYLFVYGVVNSAAYDLLKAPNYFEEFVHRFNKDYGSEVEKLRRFKIFQHNLNEIIIKNQNDSAKYEINKFSDLSKDETIAKYTGLSLPIQTQNFCKVIVLDQPPGKGPLEFDWRRLNKVTSVKNQGMCGACWAFATLASLESQFAIKHNQLINLSEQQMIDCDFVDAGCNGGLLHTAFEAIIKMGGVQLESDYPYEADNNNCRMNTNKFLVQVKDCYRYITVYEEKLKDLLRLVGPIPMAIDAADIVNYKQGIIKYCFNSGLNHAVLLVGYGVENNIPYWTFKNTWGTDWGEEGFFRVQQNINACGMRNELASTAVIY.

The N-terminal stretch at 1-16 (MNKILFYLFVYGVVNS) is a signal peptide. Residues 17-112 (AAYDLLKAPN…IVLDQPPGKG (96 aa)) constitute a propeptide, activation peptide. Intrachain disulfides connect Cys133-Cys174, Cys167-Cys207, and Cys262-Cys310. Cys136 is a catalytic residue. Asn158 is a glycosylation site (N-linked (GlcNAc...) asparagine; by host). Catalysis depends on residues His269 and Asn289.

It belongs to the peptidase C1 family. Post-translationally, synthesized as an inactive proenzyme and activated by proteolytic removal of the inhibitory propeptide.

The enzyme catalyses Endopeptidase of broad specificity, hydrolyzing substrates of both cathepsin L and cathepsin B.. Functionally, cysteine protease that plays an essential role in host liquefaction to facilitate horizontal transmission of the virus. May participate in the degradation of foreign protein expressed by the baculovirus system. In Helicoverpa zea (Corn earworm moth), this protein is Viral cathepsin (VCATH).